A 359-amino-acid chain; its full sequence is Guanine nucleotide-binding protein G(q) subunit alpha (359 aa).

S-palmitoyl cysteine attachment occurs at residues Cys-9 and Cys-10. The G-alpha domain occupies 38–359 (RELKLLLLGT…QLNLKEYNLV (322 aa)). The G1 motif stretch occupies residues 41 to 54 (KLLLLGTGESGKST). Residues Ser-50, Gly-51, Lys-52, Ser-53, Thr-54, Ser-156, Leu-180, Arg-181, and Arg-183 each coordinate GTP. Ser-53 is a Mg(2+) binding site. Positions 178-186 (DVLRVRVPT) are G2 motif. Thr-186 contributes to the Mg(2+) binding site. The segment at 201 to 210 (FRMVDVGGQR) is G3 motif. Gln-209 bears the 5-glutamyl histamine mark. A G4 motif region spans residues 270 to 277 (ILFLNKKD). Positions 274, 275, 277, and 331 each coordinate GTP. The interval 329–334 (TCATDT) is G5 motif.

This sequence belongs to the G-alpha family. G(q) subfamily. In terms of assembly, g proteins are composed of 3 units; alpha, beta and gamma. The alpha chain contains the guanine nucleotide binding site. Interacts (GDP-bound form) with RIC8A (via C-terminus); promoting GNAQ folding and association with the plasma membrane. Binds NHERF1. Forms a complex with PECAM1 and BDKRB2. Interacts with GAS2L2. Palmitoylated by ZDHHC3 and ZDHHC7. Palmitoylation occurs in the Golgi and participates in the localization of GNAQ to the plasma membrane. In terms of processing, histaminylated at Gln-209 residues by TGM2.

It is found in the cell membrane. Its subcellular location is the golgi apparatus. It localises to the nucleus. The protein resides in the nucleus membrane. It carries out the reaction GTP + H2O = GDP + phosphate + H(+). Functionally, guanine nucleotide-binding proteins (G proteins) function as transducers downstream of G protein-coupled receptors (GPCRs) in numerous signaling cascades. The alpha chain contains the guanine nucleotide binding site and alternates between an active, GTP-bound state and an inactive, GDP-bound state. Signaling by an activated GPCR promotes GDP release and GTP binding. The alpha subunit has a low GTPase activity that converts bound GTP to GDP, thereby terminating the signal. Both GDP release and GTP hydrolysis are modulated by numerous regulatory proteins. Signaling is mediated via phospholipase C-beta-dependent inositol lipid hydrolysis for signal propagation: activates phospholipase C-beta: following GPCR activation, GNAQ activates PLC-beta (PLCB1, PLCB2, PLCB3 or PLCB4), leading to production of diacylglycerol (DAG) and inositol 1,4,5-trisphosphate (IP3). Required for platelet activation. Regulates B-cell selection and survival and is required to prevent B-cell-dependent autoimmunity. Regulates chemotaxis of BM-derived neutrophils and dendritic cells (in vitro). Transduces FFAR4 signaling in response to long-chain fatty acids (LCFAs). Together with GNA11, required for heart development. This Mus musculus (Mouse) protein is Guanine nucleotide-binding protein G(q) subunit alpha (Gnaq).